The chain runs to 327 residues: DNA-directed RNA polymerase subunit alpha (327 aa).

The tract at residues 1 to 227 (MLIAHRPTLI…ELFGLARELN (227 aa)) is alpha N-terminal domain (alpha-NTD). Residues 244-327 (SDEDLRIPIE…GSYFDPNYGS (84 aa)) are alpha C-terminal domain (alpha-CTD).

The protein belongs to the RNA polymerase alpha chain family. As to quaternary structure, homodimer. The RNAP catalytic core consists of 2 alpha, 1 beta, 1 beta' and 1 omega subunit. When a sigma factor is associated with the core the holoenzyme is formed, which can initiate transcription.

The enzyme catalyses RNA(n) + a ribonucleoside 5'-triphosphate = RNA(n+1) + diphosphate. In terms of biological role, DNA-dependent RNA polymerase catalyzes the transcription of DNA into RNA using the four ribonucleoside triphosphates as substrates. The polypeptide is DNA-directed RNA polymerase subunit alpha (Tropheryma whipplei (strain TW08/27) (Whipple's bacillus)).